The following is a 933-amino-acid chain: Clumping factor A (933 aa).

The signal sequence occupies residues 1–39; it reads MNMKKKEKHAIRKKSIGVASVLVGTLIGFGLLSSKEADA. The short motif at 9-20 is the YSIRK-G/S signaling motif element; the sequence is HAIRKKSIGVAS. 2 disordered regions span residues 34–200 and 529–904; these read SKEA…SNKD and FNNG…SEDE. The tract at residues 40–542 is ligand binding A region; sequence SENSVTQSDS…SGSGDGIDKP (503 aa). Low complexity predominate over residues 47-65; the sequence is SDSASNESKSNDSSSVSAA. The segment covering 71–105 has biased composition (polar residues); the sequence is TNVSDTKTSSNTNNGETSVAQNPAQQETTQSSSTN. Residues 106–132 show a composition bias toward low complexity; the sequence is ATTEETPVTGEATTTTTNQANTPATTQ. Polar residues predominate over residues 133 to 200; it reads SSNTNAEELV…PQSTDASNKD (68 aa). The segment covering 547–565 has biased composition (acidic residues); sequence QPDEPGEIEPIPEDSDSDP. Low complexity predominate over residues 566–598; it reads GSDSGSDSNSDSGSDSGSDSTSDSGSDSASDSD. Over residues 599-861 the composition is skewed to acidic residues; sequence SASDSDSASD…DSDSESDSNS (263 aa). Residues 862-880 are compositionally biased toward low complexity; it reads DSESGSNNNVVPPNSPKNG. The span at 887 to 896 shows a compositional bias: basic and acidic residues; it reads NEAKDSKEPL. The short motif at 896–900 is the LPXTG sorting signal element; sequence LPDTG. Position 899 is a pentaglycyl murein peptidoglycan amidated threonine (T899). Residues 900-933 constitute a propeptide, removed by sortase; sequence GSEDEANTSLIWGLLASIGSLLLFRRKKENKDKK.

This sequence belongs to the serine-aspartate repeat-containing protein (SDr) family.

It is found in the secreted. The protein resides in the cell wall. Functionally, cell surface-associated protein implicated in virulence. Promotes bacterial attachment exclusively to the gamma-chain of human fibrinogen. Induces formation of bacterial clumps, which diminish the ability of group IIA phospholipase A2 to cause bacterial phospholipid hydrolysis and killing. Significantly decreases macrophage phagocytosis possibly thanks to the clumps, clumped bacteria being too large to be phagocytosed. Dominant factor responsible for human platelet aggregation, which may be an important mechanism for initiating infective endocarditis. Enhances spleen cell proliferative response in vitro, contributing significantly to the immunostimulatory activity of S.aureus. This is Clumping factor A (clfA) from Staphylococcus aureus (strain Newman).